The chain runs to 914 residues: PHD finger protein 14 (914 aa).

A disordered region spans residues 19–276 (DALDYDSSDD…EDSLLERPQT (258 aa)). Over residues 53 to 68 (ESAAGSESDSDAAAAS) the composition is skewed to low complexity. Basic and acidic residues predominate over residues 90 to 102 (EKVKESFSEETSS). 2 stretches are compositionally biased toward acidic residues: residues 155-168 (ELNEMDDYDSEDDN) and 191-233 (GEED…DSEE). The PHD-type 1 zinc finger occupies 285–346 (ILICCVCLGD…PWFCDACKNG (62 aa)). Zn(2+) contacts are provided by Cys288, Cys291, Cys305, Cys308, His313, Cys316, Cys340, Cys343, Cys351, Cys354, His371, Cys374, Cys407, Cys410, Cys424, Cys429, His434, Cys437, Cys461, and His464. A C2HC pre-PHD-type zinc finger spans residues 348 to 381 (SPSCELCPSQDGIFKETDAGRWVHVVCALYVPGV). A PHD-type 2 zinc finger spans residues 405-465 (KECSLCEDTR…PFFAYCKQHA (61 aa)). A coiled-coil region spans residues 596–644 (MIQIQDNIVEQKNLKDKLESEQEKLHMEYDKLCESLEDLQNVNGQLRTE). The PHD-type 3 zinc-finger motif lies at 692-746 (LYSCGICKKNQDQHLLLLCDTCKLHYHLGCLDPPLTRMPKKTKNSYWQCSECDQA). Residues Cys695, Cys698, Cys710, Cys713, His718, Cys721, Cys740, and Cys743 each contribute to the Zn(2+) site. A disordered region spans residues 777 to 838 (PQEMSPEPKK…PKADDTRTEC (62 aa)). Basic residues predominate over residues 792–802 (TRTRGQKRKRM). Over residues 803 to 817 (SICEEEKMEEPLPRE) the composition is skewed to basic and acidic residues. A PHD-type 4 zinc finger spans residues 835–888 (RTECTTCKGPGDNENLVRCDECRLCYHFGCLDPPLKKSPKQTGYGWICQECDTS). Zn(2+)-binding residues include Cys838, Cys841, Cys853, Cys856, His861, Cys864, Cys882, and Cys885. A disordered region spans residues 887–914 (TSSSKEEEAQEVEEESVNEETAEQEIPD). Over residues 894-914 (EAQEVEEESVNEETAEQEIPD) the composition is skewed to acidic residues.

Interacts with histone H3.

The protein resides in the nucleus. Functionally, histone-binding protein. Binds preferentially to unmodified histone H3 but can also bind to a lesser extent to histone H3 trimethylated at 'Lys-9' (H3K9me3) as well as to histone H3 monomethylated at 'Lys-27' (H3K27ac) and trimethylated at 'Lys-27' (H3K27me3). Represses PDGFRA expression, thus playing a role in regulation of mesenchymal cell proliferation. This chain is PHD finger protein 14, found in Danio rerio (Zebrafish).